The primary structure comprises 151 residues: Minor capsid protein P12 (151 aa).

Hydrophobic regions lie at residues 23–43 (FIFF…YTIY) and 46–66 (VQNT…IWNF). Cysteine 112 and cysteine 120 are disulfide-bonded.

As to quaternary structure, interacts with the major capsid protein.

Its subcellular location is the virion. Its function is as follows. One of the minor capsid proteins that constitute a network internal to the major capsid proteins and outside the lipid membrane. The minor capsid protein P12 does not serve a cross-linking function between neighboring capsomers, it may play a role in the viral capsid assembly. This Paramecium bursaria Chlorella virus 1 (PBCV-1) protein is Minor capsid protein P12.